Consider the following 55-residue polypeptide: Protein CADMIUM TOLERANCE 1 (55 aa).

A helical membrane pass occupies residues 24 to 40; that stretch reads GCLYACIFTALCCFCCY.

The protein belongs to the CYSTM1 family. Expressed in roots and shoots.

Its subcellular location is the cell membrane. It localises to the secreted. The protein resides in the cell wall. Functionally, confers resistance to heavy metal ions (e.g. cadmium (CdCl(2)) and copper (CuCl(2))) by chelating them at the plasma membrane of root cells, thus stopping their entry and reducing their accumulation. Binds to aluminium (Al). In Oryza sativa subsp. japonica (Rice), this protein is Protein CADMIUM TOLERANCE 1.